The primary structure comprises 362 residues: Glutamate 5-kinase (362 aa).

Lysine 3 provides a ligand contact to ATP. 3 residues coordinate substrate: serine 43, aspartate 128, and asparagine 140. ATP contacts are provided by residues 160 to 161 and 202 to 208; these read TD and TGGMRTK. Residues 267–348 enclose the PUA domain; it reads AGAILVDAGA…REIENVLGYS (82 aa).

The protein belongs to the glutamate 5-kinase family.

The protein localises to the cytoplasm. It catalyses the reaction L-glutamate + ATP = L-glutamyl 5-phosphate + ADP. It functions in the pathway amino-acid biosynthesis; L-proline biosynthesis; L-glutamate 5-semialdehyde from L-glutamate: step 1/2. Catalyzes the transfer of a phosphate group to glutamate to form L-glutamate 5-phosphate. The polypeptide is Glutamate 5-kinase (Xanthomonas oryzae pv. oryzae (strain KACC10331 / KXO85)).